The sequence spans 366 residues: Mannonate dehydratase (366 aa).

The protein belongs to the mannonate dehydratase family. Requires Fe(2+) as cofactor. Mn(2+) serves as cofactor.

The enzyme catalyses D-mannonate = 2-dehydro-3-deoxy-D-gluconate + H2O. Its pathway is carbohydrate metabolism; pentose and glucuronate interconversion. Catalyzes the dehydration of D-mannonate. The protein is Mannonate dehydratase of Streptococcus pneumoniae (strain 70585).